Here is a 129-residue protein sequence, read N- to C-terminus: Large ribosomal subunit protein bL17 (129 aa).

This sequence belongs to the bacterial ribosomal protein bL17 family. As to quaternary structure, part of the 50S ribosomal subunit. Contacts protein L32.

The protein is Large ribosomal subunit protein bL17 of Pseudomonas aeruginosa (strain UCBPP-PA14).